The sequence spans 202 residues: Type II restriction enzyme MunI (202 aa).

In terms of assembly, homodimer.

It carries out the reaction Endonucleolytic cleavage of DNA to give specific double-stranded fragments with terminal 5'-phosphates.. Functionally, a P subtype restriction enzyme that recognizes the double-stranded sequence 5'-CAATTG-3' and cleaves after C-1. This Mycoplasma sp protein is Type II restriction enzyme MunI.